The sequence spans 123 residues: Small ribosomal subunit protein bS16 (123 aa).

The segment at 86–123 (PVRAEQTKQPQPKAKAQQRAKDQAERDAAAAAEAAAGE) is disordered. Residues 93 to 102 (KQPQPKAKAQ) show a composition bias toward low complexity. A compositionally biased stretch (basic and acidic residues) spans 104 to 113 (RAKDQAERDA). A compositionally biased stretch (low complexity) spans 114 to 123 (AAAAEAAAGE).

This sequence belongs to the bacterial ribosomal protein bS16 family.

The chain is Small ribosomal subunit protein bS16 from Paramagnetospirillum magneticum (strain ATCC 700264 / AMB-1) (Magnetospirillum magneticum).